The following is a 405-amino-acid chain: FITKAIPIVLAALSAVNGAKILEAGPHAETIPNKYIVVMKKDVSDEAFSTHTTWLSQNLNRRLMRRSGSSKAMAGMQNKYSLGGIFRAYSGEFDDAMIKDISNHDDVDYIEPDFVVRTSTNGTNLTRQENVPSWGLARVGSKQAGGTTYYYDSSAGKGVTAYVIDTGIDIEHEDFGGRAKWGKNFVDQRDEDCNGHGTHVAGTVGGTKYGLAKSVSLVAVKVLDCDGSGSNSGVIRGMEWAMREASGGGNGTAKAAGKSVMNMSLGGPRSQASNDAARAISEAGIFMAVAAGNENMDAQHSSPASEPSVCTVAASTEDDGKAEFSNYGAVVDVYAPGKDITSLKPGGSTDTLSGTSMASPHVCGLGAYLIGLGKQGGPGLCDTIKQMANEAIQRPGEGTTGKLIY.

The N-terminal stretch at 1–18 is a signal peptide; the sequence is FITKAIPIVLAALSAVNG. Residues 19–125 constitute a propeptide that is removed on maturation; it reads AKILEAGPHA…VRTSTNGTNL (107 aa). The 85-residue stretch at 34 to 118 folds into the Inhibitor I9 domain; that stretch reads KYIVVMKKDV…YIEPDFVVRT (85 aa). 2 N-linked (GlcNAc...) asparagine glycosylation sites follow: asparagine 121 and asparagine 124. Residues 133-405 enclose the Peptidase S8 domain; the sequence is SWGLARVGSK…GEGTTGKLIY (273 aa). Residues aspartate 165 and histidine 196 each act as charge relay system in the active site. Asparagine 250 and asparagine 262 each carry an N-linked (GlcNAc...) asparagine glycan. The Charge relay system role is filled by serine 356.

It belongs to the peptidase S8 family.

The protein localises to the secreted. Secreted subtilisin-like serine protease with keratinolytic activity that contributes to pathogenicity. The chain is Subtilisin-like protease 6 (SUB6) from Trichophyton schoenleinii.